A 449-amino-acid chain; its full sequence is Tubulin beta-6 chain (449 aa).

GTP-binding residues include Gln11, Glu69, Ser138, Gly142, Thr143, Gly144, Asn204, and Asn226. Glu69 serves as a coordination point for Mg(2+). The tract at residues 425–449 (YQDATADDEGEYEEDEDEEEILDHE) is disordered. Over residues 429-449 (TADDEGEYEEDEDEEEILDHE) the composition is skewed to acidic residues.

The protein belongs to the tubulin family. As to quaternary structure, dimer of alpha and beta chains. A typical microtubule is a hollow water-filled tube with an outer diameter of 25 nm and an inner diameter of 15 nM. Alpha-beta heterodimers associate head-to-tail to form protofilaments running lengthwise along the microtubule wall with the beta-tubulin subunit facing the microtubule plus end conferring a structural polarity. Microtubules usually have 13 protofilaments but different protofilament numbers can be found in some organisms and specialized cells. It depends on Mg(2+) as a cofactor.

Its subcellular location is the cytoplasm. The protein localises to the cytoskeleton. Tubulin is the major constituent of microtubules, a cylinder consisting of laterally associated linear protofilaments composed of alpha- and beta-tubulin heterodimers. Microtubules grow by the addition of GTP-tubulin dimers to the microtubule end, where a stabilizing cap forms. Below the cap, tubulin dimers are in GDP-bound state, owing to GTPase activity of alpha-tubulin. In Arabidopsis thaliana (Mouse-ear cress), this protein is Tubulin beta-6 chain (TUBB6).